An 86-amino-acid chain; its full sequence is Translation initiation factor IF-1 2 (86 aa).

Positions 1-72 (MAKEELLEME…SKGRITFRHI (72 aa)) constitute an S1-like domain.

It belongs to the IF-1 family. Component of the 30S ribosomal translation pre-initiation complex which assembles on the 30S ribosome in the order IF-2 and IF-3, IF-1 and N-formylmethionyl-tRNA(fMet); mRNA recruitment can occur at any time during PIC assembly.

It is found in the cytoplasm. Its function is as follows. One of the essential components for the initiation of protein synthesis. Stabilizes the binding of IF-2 and IF-3 on the 30S subunit to which N-formylmethionyl-tRNA(fMet) subsequently binds. Helps modulate mRNA selection, yielding the 30S pre-initiation complex (PIC). Upon addition of the 50S ribosomal subunit IF-1, IF-2 and IF-3 are released leaving the mature 70S translation initiation complex. This Polynucleobacter asymbioticus (strain DSM 18221 / CIP 109841 / QLW-P1DMWA-1) (Polynucleobacter necessarius subsp. asymbioticus) protein is Translation initiation factor IF-1 2.